We begin with the raw amino-acid sequence, 255 residues long: Putative glutamine amidotransferase YafJ (255 aa).

Residue Cys2 is the For GATase activity of the active site. Residues Cys2–Gly251 enclose the Glutamine amidotransferase type-2 domain.

The protein is Putative glutamine amidotransferase YafJ (yafJ) of Escherichia coli (strain K12).